The primary structure comprises 253 residues: Triosephosphate isomerase (253 aa).

A substrate-binding site is contributed by 9–11 (NWK). Histidine 95 acts as the Electrophile in catalysis. Glutamate 167 acts as the Proton acceptor in catalysis. Substrate is bound by residues glycine 173, serine 213, and 234-235 (GG). Serine 213 bears the Phosphoserine mark.

The protein belongs to the triosephosphate isomerase family. Homodimer.

The protein resides in the cytoplasm. The catalysed reaction is D-glyceraldehyde 3-phosphate = dihydroxyacetone phosphate. It participates in carbohydrate biosynthesis; gluconeogenesis. The protein operates within carbohydrate degradation; glycolysis; D-glyceraldehyde 3-phosphate from glycerone phosphate: step 1/1. Its function is as follows. Involved in the gluconeogenesis. Catalyzes stereospecifically the conversion of dihydroxyacetone phosphate (DHAP) to D-glyceraldehyde-3-phosphate (G3P). The protein is Triosephosphate isomerase of Geobacillus kaustophilus (strain HTA426).